The primary structure comprises 40 residues: Spodomicin (40 aa).

Disulfide bonds link Cys6-Cys20, Cys10-Cys32, and Cys21-Cys39.

In terms of assembly, monomer. Contains three disulfide bonds. Hemolymph.

It is found in the secreted. Fungicide. This Spodoptera littoralis (Egyptian cotton leafworm) protein is Spodomicin.